The chain runs to 373 residues: GDP-mannose 4,6-dehydratase (373 aa).

NADP(+) contacts are provided by residues 9–14 (GVTGQD), 64–65 (DL), 86–90 (LGAMS), and tyrosine 101. The active site involves threonine 133. Active-site nucleophile residues include glutamate 135 and tyrosine 157. Lysine 161, histidine 187, and arginine 192 together coordinate NADP(+).

It belongs to the NAD(P)-dependent epimerase/dehydratase family. GDP-mannose 4,6-dehydratase subfamily. The cofactor is NADP(+).

The catalysed reaction is GDP-alpha-D-mannose = GDP-4-dehydro-alpha-D-rhamnose + H2O. Its pathway is nucleotide-sugar biosynthesis; GDP-L-fucose biosynthesis via de novo pathway; GDP-L-fucose from GDP-alpha-D-mannose: step 1/2. Functionally, catalyzes the conversion of GDP-D-mannose to GDP-4-dehydro-6-deoxy-D-mannose. This chain is GDP-mannose 4,6-dehydratase, found in Escherichia coli O157:H7.